A 631-amino-acid polypeptide reads, in one-letter code: Anthrax toxin receptor-like (631 aa).

An N-terminal signal peptide occupies residues 1–27 (MGSHESLGPYFLVFLLLLLLPPPLFRA). Over 28–353 (GSLRYHGPDW…TSTTCGIFRN (326 aa)) the chain is Extracellular. The VWFA domain maps to 76-246 (DLYFILDKSG…KALRSTIDAL (171 aa)). A divalent metal cation-binding residues include Ser-84, Ser-86, and Thr-150. A helical transmembrane segment spans residues 354 to 374 (WLYFVPLLLLVPLLLCCVWRL). Residues 375–631 (CRKQTVKEPP…LSLPPSEPNF (257 aa)) lie on the Cytoplasmic side of the membrane. Positions 382-413 (EPPPVQKPEKEPEQEKPPSPPPPPPPPPPPLP) are disordered. Residues 388 to 397 (KPEKEPEQEK) show a composition bias toward basic and acidic residues. Pro residues predominate over residues 398–413 (PPSPPPPPPPPPPPLP).

The protein belongs to the ATR family.

The protein localises to the membrane. The protein is Anthrax toxin receptor-like (ANTXRL) of Homo sapiens (Human).